We begin with the raw amino-acid sequence, 113 residues long: Hydrogenase maturation factor HypA (113 aa).

A Ni(2+)-binding site is contributed by H2. Zn(2+) is bound by residues C73, C76, C89, and C92.

It belongs to the HypA/HybF family.

In terms of biological role, involved in the maturation of [NiFe] hydrogenases. Required for nickel insertion into the metal center of the hydrogenase. This Legionella pneumophila subsp. pneumophila (strain Philadelphia 1 / ATCC 33152 / DSM 7513) protein is Hydrogenase maturation factor HypA.